The sequence spans 245 residues: MTSLPPSQCCIGGSLHEGETQGELTKFGDIPVYVSYPPDKSTHNAILFLSDIFGLALVNSKLIADLFAANGYLVVMPDLFQGDPVPVDHSPSFQIMDWLQGHLPPQTDPIVTATLREMRERLGCQRIGGVGYCYGGKYVVRYLHPGQLDVGFVAHPTFIEPDELKAIEGPLSISASAQDNLFPPEKRHESETILAQLDVPYQINIFSDVEHGFAVRCDLNKTRHRFAKEQSFSQGVTWFNQYLKK.

Active-site residues include cysteine 133, aspartate 179, and histidine 211.

Belongs to the dienelactone hydrolase family.

It participates in secondary metabolite biosynthesis. Hydrolase; part of the gene cluster that mediates the biosynthesis of pyranoviolin A, a pyranonigrin analog with a C-3 methoxy group. Initially, the PKS portion of pyvA synthesizes C-10 carbon chain from 5 molecules of malonyl-CoA, which is then condensed with the thiolation (T) domain-bound glycine activated by the adenylation (A) domain. The subsequent chain release by Dieckmann condensation (DKC) could be catalyzed by the TE domain present at the C-terminus of pyvA and/or the alpha/beta hydrolase pyvD, installing the tetramic acid moiety. The FAD-dependent monooxygenase pyvC next epoxidizes one of the olefins of the polyketide part, and the epoxide ring-opening induces the dihydro-gamma-pyrone ring formation. The cytochrome P450 monooxygeanse pyvB would be responsible for the 2 consecutive reactions, in which the dihydro-gamma-pyrone is oxidized to gamma-pyrone and C-7 is hydroxylated to yield pyranonigrin F. Finally, the O-methyltransferase pyvH methylates the C-3 hydroxy group to complete the biosynthesis. This chain is Hydrolase pyvD, found in Aspergillus violaceofuscus (strain CBS 115571).